The following is a 282-amino-acid chain: Bifunctional protein FolD (282 aa).

NADP(+)-binding positions include 165 to 167 (GRG), T192, and V233.

This sequence belongs to the tetrahydrofolate dehydrogenase/cyclohydrolase family. As to quaternary structure, homodimer.

The enzyme catalyses (6R)-5,10-methylene-5,6,7,8-tetrahydrofolate + NADP(+) = (6R)-5,10-methenyltetrahydrofolate + NADPH. It carries out the reaction (6R)-5,10-methenyltetrahydrofolate + H2O = (6R)-10-formyltetrahydrofolate + H(+). It participates in one-carbon metabolism; tetrahydrofolate interconversion. Its function is as follows. Catalyzes the oxidation of 5,10-methylenetetrahydrofolate to 5,10-methenyltetrahydrofolate and then the hydrolysis of 5,10-methenyltetrahydrofolate to 10-formyltetrahydrofolate. The sequence is that of Bifunctional protein FolD from Mycobacterium leprae (strain Br4923).